The sequence spans 104 residues: UPF0213 protein in VLF1-GP41 intergenic region (104 aa).

A GIY-YIG domain is found at 9 to 89; the sequence is KVWCVYILRQ…SKYFKLRLIK (81 aa).

The protein belongs to the UPF0213 family.

This Autographa californica nuclear polyhedrosis virus (AcMNPV) protein is UPF0213 protein in VLF1-GP41 intergenic region.